Here is a 314-residue protein sequence, read N- to C-terminus: Epithelial cell adhesion molecule (314 aa).

An N-terminal signal peptide occupies residues 1-23 (MAPPQVLAFGLLLAAATATFAAA). The Extracellular segment spans residues 24-265 (QEECVCENYK…APEFSMQGLK (242 aa)). 6 disulfides stabilise this stretch: cysteine 27–cysteine 46, cysteine 29–cysteine 59, cysteine 38–cysteine 48, cysteine 66–cysteine 99, cysteine 110–cysteine 116, and cysteine 118–cysteine 135. One can recognise a Thyroglobulin type-1 domain in the interval 63–135 (AAKCLVMKAE…RTDKDTEITC (73 aa)). N-linked (GlcNAc...) asparagine; partial glycosylation occurs at asparagine 74. N-linked (GlcNAc...) asparagine glycosylation is present at asparagine 111. Residue asparagine 198 is glycosylated (N-linked (GlcNAc...) asparagine). The chain crosses the membrane as a helical span at residues 266 to 288 (AGVIAVIVVVVIAVVAGIVVLVI). Over 289–314 (SRKKRMAKYEKAEIKEMGEMHRELNA) the chain is Cytoplasmic.

The protein belongs to the EPCAM family. As to quaternary structure, monomer. Interacts with phosphorylated CLDN7. Post-translationally, hyperglycosylated in carcinoma tissue as compared with autologous normal epithelia. Glycosylation at Asn-198 is crucial for protein stability. Highly and selectively expressed by undifferentiated rather than differentiated embryonic stem cells (ESC). Levels rapidly diminish as soon as ESC's differentiate (at protein levels). Expressed in almost all epithelial cell membranes but not on mesodermal or neural cell membranes. Found on the surface of adenocarcinoma.

It localises to the lateral cell membrane. The protein resides in the cell junction. The protein localises to the tight junction. In terms of biological role, may act as a physical homophilic interaction molecule between intestinal epithelial cells (IECs) and intraepithelial lymphocytes (IELs) at the mucosal epithelium for providing immunological barrier as a first line of defense against mucosal infection. Plays a role in embryonic stem cells proliferation and differentiation. Up-regulates the expression of FABP5, MYC and cyclins A and E. The sequence is that of Epithelial cell adhesion molecule (EPCAM) from Homo sapiens (Human).